Reading from the N-terminus, the 540-residue chain is Membrane protein insertase YidC (540 aa).

The next 5 helical transmembrane spans lie at 7 to 27 (LLVL…QMDY), 345 to 365 (IVSN…GILY), 415 to 435 (LGGC…YWTF), 453 to 473 (LSAQ…MFLL), and 494 to 514 (PLIF…YWLV).

This sequence belongs to the OXA1/ALB3/YidC family. Type 1 subfamily. In terms of assembly, interacts with the Sec translocase complex via SecD. Specifically interacts with transmembrane segments of nascent integral membrane proteins during membrane integration.

It localises to the cell inner membrane. Its function is as follows. Required for the insertion and/or proper folding and/or complex formation of integral membrane proteins into the membrane. Involved in integration of membrane proteins that insert both dependently and independently of the Sec translocase complex, as well as at least some lipoproteins. Aids folding of multispanning membrane proteins. This chain is Membrane protein insertase YidC, found in Mannheimia succiniciproducens (strain KCTC 0769BP / MBEL55E).